A 242-amino-acid chain; its full sequence is Anamorsin homolog (242 aa).

The tract at residues 1–140 (MMNFADTLVI…NVTAENPDFL (140 aa)) is N-terminal SAM-like domain. The segment at 141-162 (SNEDDDEGNSSDGEAYQNAEDN) is linker. C205, C208, C216, and C219 together coordinate [4Fe-4S] cluster. Short sequence motifs (cx2C motif) lie at residues 205–208 (CGNC) and 216–219 (CASC). The interval 205 to 219 (CGNCYLGDAFRCASC) is fe-S binding site B.

Belongs to the anamorsin family. Monomer. [4Fe-4S] cluster serves as cofactor.

Its subcellular location is the cytoplasm. It localises to the mitochondrion intermembrane space. In terms of biological role, component of the cytosolic iron-sulfur (Fe-S) protein assembly (CIA) machinery. Required for the maturation of extramitochondrial Fe-S proteins. Part of an electron transfer chain functioning in an early step of cytosolic Fe-S biogenesis, facilitating the de novo assembly of a [4Fe-4S] cluster on the cytosolic Fe-S scaffold complex. Electrons are transferred from NADPH via a FAD- and FMN-containing diflavin oxidoreductase. Together with the diflavin oxidoreductase, also required for the assembly of the diferric tyrosyl radical cofactor of ribonucleotide reductase (RNR), probably by providing electrons for reduction during radical cofactor maturation in the catalytic small subunit. The sequence is that of Anamorsin homolog from Plasmodium knowlesi (strain H).